The chain runs to 350 residues: Peroxidase 10 (350 aa).

Residues 1–27 (MDHKMSMYLFVSYLAIFTLFFKGFVSS) form the signal peptide. Cystine bridges form between Cys57/Cys137, Cys90/Cys95, Cys143/Cys346, and Cys222/Cys256. Catalysis depends on His88, which acts as the Proton acceptor. Ca(2+) is bound by residues Asp89, Val92, Gly94, Asp96, and Ser98. Asn102 carries N-linked (GlcNAc...) asparagine glycosylation. Substrate is bound at residue Pro185. N-linked (GlcNAc...) asparagine glycosylation is present at Asn193. His215 contacts heme b. Thr216 is a Ca(2+) binding site. 3 residues coordinate Ca(2+): Asp270, Ser273, and Asp278.

This sequence belongs to the peroxidase family. Classical plant (class III) peroxidase subfamily. Heme b is required as a cofactor. Requires Ca(2+) as cofactor. As to expression, expressed in the whole plant, with the highest expression in roots.

Its subcellular location is the secreted. It carries out the reaction 2 a phenolic donor + H2O2 = 2 a phenolic radical donor + 2 H2O. In terms of biological role, removal of H(2)O(2), oxidation of toxic reductants, biosynthesis and degradation of lignin, suberization, auxin catabolism, response to environmental stresses such as wounding, pathogen attack and oxidative stress. These functions might be dependent on each isozyme/isoform in each plant tissue. This chain is Peroxidase 10 (PER10), found in Arabidopsis thaliana (Mouse-ear cress).